The following is a 260-amino-acid chain: MKKLALSLSLVLAFSSATAAFAAIPQKIRIGTDPTYAPFESKNAQGELVGFDIDLAKELCKRINTQCTFVENPLDALIPSLKAKKIDAIMSSLSITEKRQQEIAFTDKLYAADSRLVVAKNSDIQPTVASLKGKRVGVLQGTTQETFGNEHWAPKGIEIVSYQGQDNIYSDLTAGRIDAAFQDEVAASEGFLKQPVGKDYKFGGPAVKDEKLFGVGTGMGLRKEDNELREALNKAFAEMRADGTYEKLAKKYFDFDVYGG.

The N-terminal stretch at 1–22 (MKKLALSLSLVLAFSSATAAFA) is a signal peptide. The cysteines at positions 60 and 67 are disulfide-linked. 6 residues coordinate L-histidine: serine 91, serine 92, serine 94, arginine 99, threonine 143, and aspartate 183.

Belongs to the bacterial solute-binding protein 3 family. As to quaternary structure, the complex is composed of two ATP-binding proteins (HisP), two transmembrane proteins (HisM and HisQ) and a solute-binding protein (HisJ).

It localises to the periplasm. Part of the ABC transporter complex HisPMQJ involved in histidine transport. Binds histidine. Interacts with HisQMP and stimulates ATPase activity of HisP, which results in histidine translocation. May have some additional function(s) in translocation that is independent of the stimulation of ATP hydrolysis. This Salmonella typhimurium (strain LT2 / SGSC1412 / ATCC 700720) protein is Histidine-binding periplasmic protein.